A 316-amino-acid chain; its full sequence is UPF0725 protein At1g02770 (316 aa).

The protein belongs to the UPF0725 (EMB2204) family.

This is UPF0725 protein At1g02770 from Arabidopsis thaliana (Mouse-ear cress).